The sequence spans 775 residues: Acylamino-acid-releasing enzyme 1 (775 aa).

Catalysis depends on charge relay system residues S627, D718, and H750.

It belongs to the peptidase S9C family. As to quaternary structure, homotetramer.

The protein localises to the cytoplasm. The enzyme catalyses Cleavage of an N-acetyl or N-formyl amino acid from the N-terminus of a polypeptide.. Catalyzes the hydrolysis of the N-terminal peptide bond of an N-acetylated peptide to generate an N-acetylated amino acid and a peptide with a free N-terminus. The sequence is that of Acylamino-acid-releasing enzyme 1 from Oryza sativa subsp. japonica (Rice).